The chain runs to 40 residues: Photosystem II reaction center protein J (40 aa).

The helical transmembrane segment at 8–28 threads the bilayer; sequence IPLWLIGTVTGIPVIGSIGIF.

It belongs to the PsbJ family. As to quaternary structure, PSII is composed of 1 copy each of membrane proteins PsbA, PsbB, PsbC, PsbD, PsbE, PsbF, PsbH, PsbI, PsbJ, PsbK, PsbL, PsbM, PsbT, PsbX, PsbY, PsbZ, Psb30/Ycf12, at least 3 peripheral proteins of the oxygen-evolving complex and a large number of cofactors. It forms dimeric complexes.

It is found in the plastid. The protein resides in the chloroplast thylakoid membrane. In terms of biological role, one of the components of the core complex of photosystem II (PSII). PSII is a light-driven water:plastoquinone oxidoreductase that uses light energy to abstract electrons from H(2)O, generating O(2) and a proton gradient subsequently used for ATP formation. It consists of a core antenna complex that captures photons, and an electron transfer chain that converts photonic excitation into a charge separation. The protein is Photosystem II reaction center protein J of Chloranthus spicatus (Chulantree).